The primary structure comprises 165 residues: Short form salivary protein D7R4 (165 aa).

The first 21 residues, 1-21 (MIRQVITSYFLTVCLLALVQG), serve as a signal peptide directing secretion. 3 cysteine pairs are disulfide-bonded: cysteine 27–cysteine 59, cysteine 40–cysteine 165, and cysteine 98–cysteine 117. Noradrenaline-binding residues include glutamate 28 and arginine 43. Glutamate 28 provides a ligand contact to serotonin. The serotonin site is built by histidine 56, tyrosine 115, aspartate 132, and glutamate 135. Residues tyrosine 115, aspartate 132, and glutamate 135 each coordinate histamine. Tryptamine-binding residues include tyrosine 115, aspartate 132, and glutamate 135. Positions 132 and 135 each coordinate noradrenaline.

This sequence belongs to the PBP/GOBP family. As to expression, female saliva (at protein level). Female salivary gland. Not detected in female carcass without salivary glands. Not detected in male tissues.

Its subcellular location is the secreted. Modulates blood feeding of female mosquitoes on vertebrate species by binding and sequestering different mediators involved in the host response. Binds serotonin, noradrenaline, histamine and tryptamine. Inhibits histamine-, serotonin- and partially noradrenaline-induced smooth muscle contraction. Exhibits vasodilating activity. This is Short form salivary protein D7R4 from Anopheles gambiae (African malaria mosquito).